Consider the following 170-residue polypeptide: 3-hydroxyanthranilate 3,4-dioxygenase (170 aa).

Arg-44 contacts O2. Fe cation-binding residues include His-48, Glu-54, and His-92. Glu-54 is a substrate binding site. Substrate is bound by residues Arg-96 and Glu-106. Cys-121, Cys-124, Cys-158, and Cys-161 together coordinate a divalent metal cation.

The protein belongs to the 3-HAO family. Fe(2+) serves as cofactor.

Its subcellular location is the cytoplasm. It catalyses the reaction 3-hydroxyanthranilate + O2 = (2Z,4Z)-2-amino-3-carboxymuconate 6-semialdehyde. It functions in the pathway cofactor biosynthesis; NAD(+) biosynthesis; quinolinate from L-kynurenine: step 3/3. Catalyzes the oxidative ring opening of 3-hydroxyanthranilate to 2-amino-3-carboxymuconate semialdehyde, which spontaneously cyclizes to quinolinate. The polypeptide is 3-hydroxyanthranilate 3,4-dioxygenase (Scheffersomyces stipitis (strain ATCC 58785 / CBS 6054 / NBRC 10063 / NRRL Y-11545) (Yeast)).